The following is a 1782-amino-acid chain: Vitellogenin receptor (1782 aa).

Residues 1–18 form the signal peptide; the sequence is MRFIVLLFICSFIYPCYV. Over 19-1663 the chain is Extracellular; that stretch reads SSIGFRRISK…SINFSRNTRN (1645 aa). LDL-receptor class A domains follow at residues 35–72, 81–118, and 122–157; these read KCED…FECD, TCAK…DGCV, and NCTN…WNCK. 6 disulfides stabilise this stretch: Cys-36/Cys-48, Cys-43/Cys-61, Cys-55/Cys-71, Cys-82/Cys-94, Cys-89/Cys-107, and Cys-101/Cys-117. N-linked (GlcNAc...) asparagine glycosylation is present at Asn-122. 3 disulfides stabilise this stretch: Cys-123-Cys-134, Cys-129-Cys-147, and Cys-141-Cys-156. Residue Asn-159 is glycosylated (N-linked (GlcNAc...) asparagine). The LDL-receptor class A 4 domain occupies 166-205; that stretch reads SCKTENYQYMCANHRCISLKVVCDKKDDCGDGSDEGPGCT. Intrachain disulfides connect Cys-167–Cys-181, Cys-176–Cys-194, and Cys-188–Cys-204. N-linked (GlcNAc...) asparagine glycans are attached at residues Asn-208 and Asn-239. Residues 208-243 form the EGF-like 1 domain; sequence NCSSAGCQSNCHQTPKGSVCTCKPGYKLQKDNRTCN. Residues 244 to 283 form the EGF-like; calcium-binding domain; the sequence is DIDECQAYGICDQDCMNVPGSYACTCQREYYLENDKRTCK. Cystine bridges form between Cys-248–Cys-258, Cys-254–Cys-267, and Cys-269–Cys-282. 5 LDL-receptor class B repeats span residues 327-374, 375-416, 417-460, 461-501, and 502-544; these read DYVY…DWIT, KNIY…LPTQ, GKMY…DYPN, ERLY…TVFQ, and NKLY…DHSA. The region spanning 552 to 588 is the EGF-like 2 domain; sequence PCYSNPCSQLCMLNQNKGYTCGCTLDKKLNADKHTCQ. N-linked (GlcNAc...) asparagine glycans are attached at residues Asn-702, Asn-859, Asn-896, and Asn-923. Positions 889-927 constitute an EGF-like 3 domain; that stretch reads DCQKNNGNCSHVCLPSLITSFICACPPGMELSNDNRTCI. 5 LDL-receptor class A domains span residues 931–969, 973–1009, 1012–1049, 1052–1090, and 1094–1131; these read ECSK…SECR, RCKE…QNCE, KCKS…EDCR, ECTS…EKCY, and ACKM…VHCL. Intrachain disulfides connect Cys-932–Cys-945, Cys-939–Cys-958, Cys-952–Cys-968, Cys-974–Cys-986, Cys-981–Cys-999, Cys-993–Cys-1008, Cys-1013–Cys-1026, Cys-1020–Cys-1039, Cys-1033–Cys-1048, Cys-1053–Cys-1065, Cys-1060–Cys-1078, Cys-1072–Cys-1089, Cys-1095–Cys-1108, Cys-1103–Cys-1121, and Cys-1115–Cys-1130. Asn-1133 and Asn-1140 each carry an N-linked (GlcNAc...) asparagine glycan. LDL-receptor class A domains lie at 1140 to 1177, 1178 to 1214, and 1225 to 1260; these read NCSL…QNCT, YCFE…KNCD, and ECDE…GKCQ. Intrachain disulfides connect Cys-1141/Cys-1154, Cys-1148/Cys-1167, Cys-1161/Cys-1176, Cys-1179/Cys-1191, Cys-1186/Cys-1204, Cys-1198/Cys-1213, Cys-1226/Cys-1236, Cys-1231/Cys-1249, and Cys-1243/Cys-1259. An N-linked (GlcNAc...) asparagine glycan is attached at Asn-1175. Residues 1262-1298 enclose the EGF-like 4 domain; that stretch reads ACTVNNFCKGMCYKTPAGAVCGCQSGYRLAVDMISCE. LDL-receptor class B repeat units follow at residues 1385 to 1425, 1471 to 1518, and 1519 to 1561; these read DSVY…DWIT, RWLF…DHVK, and SKLY…FEQS. Residues Asn-1626, Asn-1640, and Asn-1656 are each glycosylated (N-linked (GlcNAc...) asparagine). A helical transmembrane segment spans residues 1664 to 1684; sequence ISGIYSITIIVLLVSVLLLCV. Residues 1685–1782 lie on the Cytoplasmic side of the membrane; it reads YYYYQKNKLK…ALIYFVHNSK (98 aa).

As to expression, expressed in ovaries of reproductive females.

The protein localises to the membrane. Its function is as follows. Involved in uptake of vitellogenin by endocytosis. Expression is regulated by the juvenile hormone analog, methoprene (in vitro). The polypeptide is Vitellogenin receptor (Solenopsis invicta (Red imported fire ant)).